The primary structure comprises 200 residues: ATP-dependent Clp protease proteolytic subunit (200 aa).

The active-site Nucleophile is Ser-101. His-126 is an active-site residue.

The protein belongs to the peptidase S14 family. In terms of assembly, component of the chloroplastic Clp protease core complex.

The protein localises to the plastid. It is found in the chloroplast stroma. It catalyses the reaction Hydrolysis of proteins to small peptides in the presence of ATP and magnesium. alpha-casein is the usual test substrate. In the absence of ATP, only oligopeptides shorter than five residues are hydrolyzed (such as succinyl-Leu-Tyr-|-NHMec, and Leu-Tyr-Leu-|-Tyr-Trp, in which cleavage of the -Tyr-|-Leu- and -Tyr-|-Trp bonds also occurs).. Its function is as follows. Cleaves peptides in various proteins in a process that requires ATP hydrolysis. Has a chymotrypsin-like activity. Plays a major role in the degradation of misfolded proteins. This is ATP-dependent Clp protease proteolytic subunit from Ostreococcus tauri.